The sequence spans 190 residues: Holliday junction branch migration complex subunit RuvA (190 aa).

The segment at 1–64 is domain I; that stretch reads MIGRITGTLI…EDAHLLYGFG (64 aa). A domain II region spans residues 65-137; the sequence is TASERAAFRE…MRGKLGADIG (73 aa). Residues 137–141 form a flexible linker region; that stretch reads GATPH. The interval 142-190 is domain III; it reads AVPDSQSDILNALLALGYSEKESLAALKTLPEGLGVSDGIRQALKALAR.

Belongs to the RuvA family. Homotetramer. Forms an RuvA(8)-RuvB(12)-Holliday junction (HJ) complex. HJ DNA is sandwiched between 2 RuvA tetramers; dsDNA enters through RuvA and exits via RuvB. An RuvB hexamer assembles on each DNA strand where it exits the tetramer. Each RuvB hexamer is contacted by two RuvA subunits (via domain III) on 2 adjacent RuvB subunits; this complex drives branch migration. In the full resolvosome a probable DNA-RuvA(4)-RuvB(12)-RuvC(2) complex forms which resolves the HJ.

It is found in the cytoplasm. Functionally, the RuvA-RuvB-RuvC complex processes Holliday junction (HJ) DNA during genetic recombination and DNA repair, while the RuvA-RuvB complex plays an important role in the rescue of blocked DNA replication forks via replication fork reversal (RFR). RuvA specifically binds to HJ cruciform DNA, conferring on it an open structure. The RuvB hexamer acts as an ATP-dependent pump, pulling dsDNA into and through the RuvAB complex. HJ branch migration allows RuvC to scan DNA until it finds its consensus sequence, where it cleaves and resolves the cruciform DNA. The protein is Holliday junction branch migration complex subunit RuvA of Bordetella avium (strain 197N).